Consider the following 1164-residue polypeptide: DNA-directed RNA polymerase 133 kDa polypeptide (1164 aa).

The protein belongs to the RNA polymerase beta chain family. The DNA-dependent RNA polymerase used for intermediate and late genes expression consists of eight subunits 147 kDa, 133 kDa, 35 kDa, 30 kDa, 22 kDa, 19 kDa, 18 kDa and 7 kDa totalling more than 500 kDa in mass. The same holoenzyme, with the addition of the transcription-specificity factor RAP94, is used for early gene expression.

It localises to the virion. It catalyses the reaction RNA(n) + a ribonucleoside 5'-triphosphate = RNA(n+1) + diphosphate. Its function is as follows. Part of the DNA-dependent RNA polymerase which catalyzes the transcription of viral DNA into RNA using the four ribonucleoside triphosphates as substrates. Responsible for the transcription of early, intermediate and late genes. DNA-dependent RNA polymerase associates with the early transcription factor (ETF), itself composed of D6 and A7, thereby allowing the early genes transcription. Late transcription, and probably also intermediate transcription, require newly synthesized RNA polymerase. This Homo sapiens (Human) protein is DNA-directed RNA polymerase 133 kDa polypeptide (RPO132).